The chain runs to 1664 residues: MAARRGRRDGVAPPPSGGPGPDPGGGARGSGWGSRSQAPYGTLGAVSGGEQVLLHEEAGDSGFVSLSRLGPSLRDKDLEMEELMLQDETLLGTMQSYMDASLISLIEDFGSLGESRLSLEDQNEVSLLTALTEILDNADSENLSPFDSIPDSELLVSPREGSSLHKLLTLSRTPPERDLITPVDPLGPSTGSSRGSGVEMSLPDPSWDFSPPSFLETSSPKLPSWRPPRSRPRWGQSPPPQQRSDGEEEEEVASFSGQILAGELDNCVSSIPDFPMHLACPEEEDKATAAEMAVPAAGDESISSLSELVRAMHPYCLPNLTHLASLEDELQEQPDDLTLPEGCVVLEIVGQAATAGDDLEIPVVVRQVSPGPRPVLLDDSLETSSALQLLMPTLESETEAAVPKVTLCSEKEGLSLNSEEKLDSACLLKPREVVEPVVPKEPQNPPANAAPGSQRARKGRKKKSKEQPAACVEGYARRLRSSSRGQSTVGTEVTSQVDNLQKQPQEELQKESGPLQGKGKPRAWARAWAAALENSSPKNLERSAGQSSPAKEGPLDLYPKLADTIQTNPIPTHLSLVDSAQASPMPVDSVEADPTAVGPVLAGPVPVDPGLVDLASTSSELVEPLPAEPVLINPVLADSAAVDPAVVPISDNLPPVDAVPSGPAPVDLALVDPVPNDLTPVDPVLVKSRPTDPRRGAVSSALGGSAPQLLVESESLDPPKTIIPEVKEVVDSLKIESGTSATTHEARPRPLSLSEYRRRRQQRQAETEERSPQPPTGKWPSLPETPTGLADIPCLVIPPAPAKKTALQRSPETPLEICLVPVGPSPASPSPEPPVSKPVASSPTEQVPSQEMPLLARPSPPVQSVSPAVPTPPSMSAALPFPAGGLGMPPSLPPPPLQPPSLPLSMGPVLPDPFTHYAPLPSWPCYPHVSPSGYPCLPPPPTVPLVSGTPGAYAVPPTCSVPWAPPPAPVSPYSSTCTYGPLGWGPGPQHAPFWSTVPPPPLPPASIGRAVPQPKMESRGTPAGPPENVLPLSMAPPLSLGLPGHGAPQTEPTKVEVKPVPASPHPKHKVSALVQSPQMKALACVSAEGVTVEEPASERLKPETQETRPREKPPLPATKAVPTPRQSTVPKLPAVHPARLRKLSFLPTPRTQGSEDVVQAFISEIGIEASDLSSLLEQFEKSEAKKECPPPAPADSLAVGNSGGVDIPQEKRPLDRLQAPELANVAGLTPPATPPHQLWKPLAAVSLLAKAKSPKSTAQEGTLKPEGVTEAKHPAAVRLQEGVHGPSRVHVGSGDHDYCVRSRTPPKKMPALVIPEVGSRWNVKRHQDITIKPVLSLGPAAPPPPCIAASREPLDHRTSSEQADPSAPCLAPSSLLSPEASPCRNDMNTRTPPEPSAKQRSMRCYRKACRSASPSSQGWQGRRGRNSRSVSSGSNRTSEASSSSSSSSSSSRSRSRSLSPPHKRWRRSSCSSSGRSRRCSSSSSSSSSSSSSSSSSSSSRSRSRSPSPRRRSDRRRRYSSYRSHDHYQRQRVLQKERAIEERRVVFIGKIPGRMTRSELKQRFSVFGEIEECTIHFRVQGDNYGFVTYRYAEEAFAAIESGHKLRQADEQPFDLCFGGRRQFCKRSYSDLDSNREDFDPAPVKSKFDSLDFDTLLKQAQKNLRR.

Disordered stretches follow at residues 1–44 (MAAR…GTLG), 167–255 (LLTL…VASF), 436–555 (PVVP…EGPL), 681–701 (VDPV…VSSA), 735–793 (IESG…ADIP), 818–873 (CLVP…PTPP), and 1045–1068 (HGAP…HPKH). A compositionally biased stretch (pro residues) spans 12 to 22 (APPPSGGPGPD). Residues 23–32 (PGGGARGSGW) are compositionally biased toward gly residues. Low complexity predominate over residues 201–224 (SLPDPSWDFSPPSFLETSSPKLPS). Position 237 is a phosphoserine (Ser-237). Residues 433–467 (VVEPVVPKEPQNPPANAAPGSQRARKGRKKKSKEQ) form a necessary for interaction with CREB1 and NRF1 and for transcriptional coactivation region. A compositionally biased stretch (basic residues) spans 455-464 (RARKGRKKKS). Residues 482–499 (SSRGQSTVGTEVTSQVDN) are compositionally biased toward polar residues. A compositionally biased stretch (low complexity) spans 522 to 531 (RAWARAWAAA). Over residues 533–549 (ENSSPKNLERSAGQSSP) the composition is skewed to polar residues. 2 positions are modified to phosphoserine: Ser-536 and Ser-548. The segment covering 823–836 (GPSPASPSPEPPVS) has biased composition (pro residues). Residues 862-873 (VQSVSPAVPTPP) are compositionally biased toward low complexity. Ser-1076 is modified (phosphoserine). Disordered regions lie at residues 1093–1130 (EEPA…STVP), 1182–1209 (SEAK…DIPQ), and 1334–1528 (VLSL…DHYQ). Basic and acidic residues predominate over residues 1096–1113 (ASERLKPETQETRPREKP). Positions 1365 to 1383 (PSAPCLAPSSLLSPEASPC) are enriched in low complexity. Residues 1379–1450 (EASPCRNDMN…SSSSSSSSSS (72 aa)) form a necessary for interaction with CREB1 and NRF1 region. Residues 1400 to 1409 (RSMRCYRKAC) are compositionally biased toward basic residues. 2 positions are modified to phosphoserine: Ser-1411 and Ser-1413. Composition is skewed to low complexity over residues 1427-1459 (SRSV…RSLS) and 1468-1500 (SSCS…SSSR). A compositionally biased stretch (basic residues) spans 1501–1519 (SRSRSPSPRRRSDRRRRYS). The 77-residue stretch at 1543-1619 (RVVFIGKIPG…QPFDLCFGGR (77 aa)) folds into the RRM domain.

Interacts with CREB1 and NRF1. In terms of tissue distribution, strongly expressed in heart and skeletal muscle, moderately in lung, placenta, intestine, liver, kidney, spleen, thymus, colon and brain. Also expressed in several oncocytic thyroid tumors.

The protein localises to the nucleus. Acts as a coactivator during transcriptional activation of nuclear genes related to mitochondrial biogenesis and cell growth. Involved in the transcription coactivation of CREB and NRF1 target genes. This Homo sapiens (Human) protein is Peroxisome proliferator-activated receptor gamma coactivator-related protein 1 (PPRC1).